A 100-amino-acid polypeptide reads, in one-letter code: C-X-C motif chemokine 2 (100 aa).

Positions 1–31 (MAPPTRQLLNAVLVLLLLLATNHQGTGVVVA) are cleaved as a signal peptide. 2 cysteine pairs are disulfide-bonded: Cys-36/Cys-62 and Cys-38/Cys-78.

It belongs to the intercrine alpha (chemokine CxC) family. As to quaternary structure, homotetramer. In terms of tissue distribution, at least expressed in the lung and trachea.

The protein localises to the secreted. Functionally, chemotactic for human polymorphonuclear leukocytes but does not induce chemokinesis or an oxidative burst. Contributes to neutrophil activation during inflammation. The protein is C-X-C motif chemokine 2 (Cxcl2) of Rattus norvegicus (Rat).